Consider the following 118-residue polypeptide: Small ribosomal subunit protein uS13 (118 aa).

Positions 99–118 are disordered; that stretch reads GQRTRTNARTRKGPRKAIKK.

Belongs to the universal ribosomal protein uS13 family. In terms of assembly, part of the 30S ribosomal subunit. Forms a loose heterodimer with protein S19. Forms two bridges to the 50S subunit in the 70S ribosome.

Its function is as follows. Located at the top of the head of the 30S subunit, it contacts several helices of the 16S rRNA. In the 70S ribosome it contacts the 23S rRNA (bridge B1a) and protein L5 of the 50S subunit (bridge B1b), connecting the 2 subunits; these bridges are implicated in subunit movement. Contacts the tRNAs in the A and P-sites. The polypeptide is Small ribosomal subunit protein uS13 (Xylella fastidiosa (strain M23)).